Consider the following 201-residue polypeptide: Ras-related protein RabA (201 aa).

15-22 (GDSGVGKS) serves as a coordination point for GTP. An Effector region motif is present at residues 37–45 (YISTIGVDF). GTP contacts are provided by residues 63–67 (DTAGQ) and 121–124 (NKSD). A Cysteine methyl ester modification is found at Cys-198. A lipid anchor (S-geranylgeranyl cysteine) is attached at Cys-198. The propeptide at 199–201 (IIN) is removed in mature form.

This sequence belongs to the small GTPase superfamily. Rab family.

It is found in the cell membrane. In Dictyostelium discoideum (Social amoeba), this protein is Ras-related protein RabA (rabA).